The chain runs to 1254 residues: Protein transport protein Sec31A (1254 aa).

WD repeat units follow at residues 4 to 47 (KEIN…EIFE), 64 to 111 (SSPH…AGDS), 120 to 160 (KHTG…SPMT), 166 to 206 (QPQE…LIIK), 209 to 254 (DHSN…SPLK), 258 to 298 (NHTR…VLYE), and 301 to 341 (TSTQ…NDNA). Residues 364–383 (TLPPLQLPQQTSPQSTITPL) are compositionally biased toward low complexity. The disordered stretch occupies residues 364 to 386 (TLPPLQLPQQTSPQSTITPLKKP). One copy of the WD 8; interaction with SEC13 repeat lies at 397–428 (SFAFGGKLVTLDNIKPTAQQPQQTAAHVVHIS). Disordered regions lie at residues 818 to 892 (PMQT…QSPA), 983 to 1008 (CFQH…GTQH), and 1058 to 1125 (PPAP…PGAP). A compositionally biased stretch (low complexity) spans 832–846 (AQPAAPAVPPQYYQQ). Polar residues-rich tracts occupy residues 847–863 (GRSA…TPTA) and 872–881 (VPSSDPQGDS). Residues 1080-1091 (QTLQPQQQVPDQ) are compositionally biased toward low complexity.

It belongs to the WD repeat SEC31 family. COPII is composed of at least 5 proteins: the SEC23/24 complex, the SEC13/31 complex and SAR1. SEC13 and SEC31 make a 2:2 tetramer that forms the edge element of the COPII outer coat. The tetramer self-assembles in multiple copies to form the complete polyhedral cage. Interacts (via WD 8) with SEC13.

The protein resides in the cytoplasm. It is found in the cytoplasmic vesicle. Its subcellular location is the COPII-coated vesicle membrane. The protein localises to the endoplasmic reticulum membrane. Functionally, component of the coat protein complex II (COPII) which promotes the formation of transport vesicles from the endoplasmic reticulum (ER). The coat has two main functions, the physical deformation of the endoplasmic reticulum membrane into vesicles and the selection of cargo molecules. This chain is Protein transport protein Sec31A (sec31a), found in Danio rerio (Zebrafish).